The sequence spans 481 residues: Proline--tRNA ligase (481 aa).

This sequence belongs to the class-II aminoacyl-tRNA synthetase family. ProS type 3 subfamily. In terms of assembly, homodimer.

It localises to the cytoplasm. It carries out the reaction tRNA(Pro) + L-proline + ATP = L-prolyl-tRNA(Pro) + AMP + diphosphate. In terms of biological role, catalyzes the attachment of proline to tRNA(Pro) in a two-step reaction: proline is first activated by ATP to form Pro-AMP and then transferred to the acceptor end of tRNA(Pro). This is Proline--tRNA ligase from Saccharolobus islandicus (strain Y.N.15.51 / Yellowstone #2) (Sulfolobus islandicus).